The chain runs to 274 residues: 2,3,4,5-tetrahydropyridine-2,6-dicarboxylate N-succinyltransferase (274 aa).

Positions 104 and 141 each coordinate substrate.

Belongs to the transferase hexapeptide repeat family. In terms of assembly, homotrimer.

The protein resides in the cytoplasm. The catalysed reaction is (S)-2,3,4,5-tetrahydrodipicolinate + succinyl-CoA + H2O = (S)-2-succinylamino-6-oxoheptanedioate + CoA. It functions in the pathway amino-acid biosynthesis; L-lysine biosynthesis via DAP pathway; LL-2,6-diaminopimelate from (S)-tetrahydrodipicolinate (succinylase route): step 1/3. The sequence is that of 2,3,4,5-tetrahydropyridine-2,6-dicarboxylate N-succinyltransferase from Shewanella amazonensis (strain ATCC BAA-1098 / SB2B).